A 158-amino-acid polypeptide reads, in one-letter code: 2-C-methyl-D-erythritol 2,4-cyclodiphosphate synthase (158 aa).

Positions 8 and 10 each coordinate a divalent metal cation. 4-CDP-2-C-methyl-D-erythritol 2-phosphate contacts are provided by residues 8 to 10 (DVH) and 34 to 35 (HS). Position 42 (histidine 42) interacts with a divalent metal cation. 4-CDP-2-C-methyl-D-erythritol 2-phosphate contacts are provided by residues 56–58 (DIG), 61–65 (FPDTD), 100–106 (AQVPKMA), 132–135 (TTTE), phenylalanine 139, and arginine 142.

This sequence belongs to the IspF family. As to quaternary structure, homotrimer. The cofactor is a divalent metal cation.

The enzyme catalyses 4-CDP-2-C-methyl-D-erythritol 2-phosphate = 2-C-methyl-D-erythritol 2,4-cyclic diphosphate + CMP. It functions in the pathway isoprenoid biosynthesis; isopentenyl diphosphate biosynthesis via DXP pathway; isopentenyl diphosphate from 1-deoxy-D-xylulose 5-phosphate: step 4/6. In terms of biological role, involved in the biosynthesis of isopentenyl diphosphate (IPP) and dimethylallyl diphosphate (DMAPP), two major building blocks of isoprenoid compounds. Catalyzes the conversion of 4-diphosphocytidyl-2-C-methyl-D-erythritol 2-phosphate (CDP-ME2P) to 2-C-methyl-D-erythritol 2,4-cyclodiphosphate (ME-CPP) with a corresponding release of cytidine 5-monophosphate (CMP). The polypeptide is 2-C-methyl-D-erythritol 2,4-cyclodiphosphate synthase (Sodalis glossinidius (strain morsitans)).